Consider the following 409-residue polypeptide: uncharacterized protein (409 aa).

The region spanning 5 to 274 is the OBG-type G domain; the sequence is ILIGFVGKPS…LAKQGFVKYE (270 aa). GTP is bound by residues 11–18 and 83–87; these read GKPSSGKS and DVAGL.

This sequence belongs to the TRAFAC class OBG-HflX-like GTPase superfamily. OBG GTPase family.

The protein localises to the cytoplasm. Its subcellular location is the nucleus. This is an uncharacterized protein from Schizosaccharomyces pombe (strain 972 / ATCC 24843) (Fission yeast).